The chain runs to 485 residues: GlcNAc-binding protein A (485 aa).

A signal peptide spans 1-23 (MKKQPKMTAIALILSGISGLAYG). Residues 24-201 (HGYVSAVENG…SFYNVIDVKF (178 aa)) enclose the Chitin-binding type-4 domain. A Chitin-binding type-3 domain is found at 437–478 (AGTKVLASDGAIYQCKPWPYSGYCQQWTSNATQYQPGTGSHW).

Belongs to the GbpA family.

The protein resides in the secreted. Probably interacts with GlcNAc residues. May promote attachment to both epithelial cell surfaces and chitin. This Vibrio cholerae serotype O1 (strain ATCC 39541 / Classical Ogawa 395 / O395) protein is GlcNAc-binding protein A.